The primary structure comprises 138 residues: Transcriptional activator protein (138 aa).

Low complexity predominate over residues 1–20; sequence MTGSKKTPSTSPSKKLSSPP. The disordered stretch occupies residues 1–23; sequence MTGSKKTPSTSPSKKLSSPPEVK. The Nuclear localization signal motif lies at 23–37; the sequence is KLRHRFAKRQIRRRR. A zinc finger lies at 42 to 59; that stretch reads CGCSIYIHINCVNNGFTH. Over residues 85–106 the composition is skewed to polar residues; sequence NTASGDANVHTQPGISHSSQSK. The disordered stretch occupies residues 85 to 123; that stretch reads NTASGDANVHTQPGISHSSQSKPQHEDSVGSPQSLLQLP. Low complexity predominate over residues 113-123; the sequence is VGSPQSLLQLP. The tract at residues 124–138 is transactivation; the sequence is SLDDVDDDFWADLLK.

This sequence belongs to the geminiviridae transcriptional activator protein family. Monomer. Homodimer. Homooligomer. Self-interaction correlates with nuclear localization and efficient activation of transcription. Monomers suppress local silencing by interacting with and inactivating host adenosine kinase 2 (ADK2) in the cytoplasm. Interacts with and inhibits host SNF1 kinase. Binds to ssDNA. Phosphorylated.

It localises to the host nucleus. It is found in the host cytoplasm. Strong activator of the late viral genes promoters. Enhances the expression of the capsid protein and nuclear shuttle protein. Acts as a suppressor of RNA-mediated gene silencing, also known as post-transcriptional gene silencing (PTGS), a mechanism of plant viral defense that limits the accumulation of viral RNAs. Suppresses the host RNA silencing by inhibiting adenosine kinase 2 (ADK2), a kinase involved in a general methylation pathway. Also suppresses the host basal defense by interacting with and inhibiting SNF1 kinase, a key regulator of cell metabolism implicated in innate antiviral defense. Determines pathogenicity. The chain is Transcriptional activator protein from Pepper huasteco yellow vein virus (PHYVV).